A 113-amino-acid chain; its full sequence is Hydrogenase maturation factor HypA (113 aa).

Residue histidine 2 coordinates Ni(2+). Zn(2+)-binding residues include cysteine 73, cysteine 76, cysteine 89, and cysteine 92.

It belongs to the HypA/HybF family.

Involved in the maturation of [NiFe] hydrogenases. Required for nickel insertion into the metal center of the hydrogenase. The chain is Hydrogenase maturation factor HypA from Chlorobium phaeobacteroides (strain BS1).